A 717-amino-acid polypeptide reads, in one-letter code: UvrABC system protein C (717 aa).

Residues 16 to 95 enclose the GIY-YIG domain; it reads DSPGVYKFRD…IKEFDPRFNV (80 aa). The UVR domain occupies 208–243; the sequence is GTYIRRLEKDMMQAAEEMEYERAARLRDDAEALKRA. The disordered stretch occupies residues 467 to 548; sequence ERTGEWEEAP…PREDDGRPKR (82 aa). The segment covering 477 to 522 has biased composition (low complexity); the sequence is EAAPGSASVHASATGPAATGQATAGPAAMGQAAAGPVSTGPAATGP.

The protein belongs to the UvrC family. Interacts with UvrB in an incision complex.

The protein resides in the cytoplasm. The UvrABC repair system catalyzes the recognition and processing of DNA lesions. UvrC both incises the 5' and 3' sides of the lesion. The N-terminal half is responsible for the 3' incision and the C-terminal half is responsible for the 5' incision. In Streptomyces griseus subsp. griseus (strain JCM 4626 / CBS 651.72 / NBRC 13350 / KCC S-0626 / ISP 5235), this protein is UvrABC system protein C.